The following is a 416-amino-acid chain: Ribulose bisphosphate carboxylase large chain (416 aa).

Substrate contacts are provided by Asn100 and Thr150. Lys152 serves as the catalytic Proton acceptor. Residue Lys154 participates in substrate binding. Lys178, Asp180, and Glu181 together coordinate Mg(2+). Lys178 is subject to N6-carboxylysine. The active-site Proton acceptor is the His271. Arg272, His304, and Ser356 together coordinate substrate.

Belongs to the RuBisCO large chain family. Type I subfamily. Heterohexadecamer of 8 large chains and 8 small chains; disulfide-linked. The disulfide link is formed within the large subunit homodimers. Mg(2+) serves as cofactor. Post-translationally, the disulfide bond which can form in the large chain dimeric partners within the hexadecamer appears to be associated with oxidative stress and protein turnover.

The protein resides in the plastid. It localises to the chloroplast. It carries out the reaction 2 (2R)-3-phosphoglycerate + 2 H(+) = D-ribulose 1,5-bisphosphate + CO2 + H2O. The catalysed reaction is D-ribulose 1,5-bisphosphate + O2 = 2-phosphoglycolate + (2R)-3-phosphoglycerate + 2 H(+). In terms of biological role, ruBisCO catalyzes two reactions: the carboxylation of D-ribulose 1,5-bisphosphate, the primary event in carbon dioxide fixation, as well as the oxidative fragmentation of the pentose substrate in the photorespiration process. Both reactions occur simultaneously and in competition at the same active site. The protein is Ribulose bisphosphate carboxylase large chain (rbcL) of Cheiropleuria bicuspis (Fern).